Reading from the N-terminus, the 55-residue chain is Large ribosomal subunit protein bL32c (55 aa).

The protein belongs to the bacterial ribosomal protein bL32 family.

The protein resides in the plastid. The protein localises to the chloroplast. The sequence is that of Large ribosomal subunit protein bL32c from Nicotiana sylvestris (Wood tobacco).